The chain runs to 165 residues: Ribosome maturation factor RimM (165 aa).

One can recognise a PRC barrel domain in the interval 94 to 165; it reads EDEFYIADLN…YVVLNYQREI (72 aa).

Belongs to the RimM family. In terms of assembly, binds ribosomal protein uS19.

The protein localises to the cytoplasm. An accessory protein needed during the final step in the assembly of 30S ribosomal subunit, possibly for assembly of the head region. Essential for efficient processing of 16S rRNA. May be needed both before and after RbfA during the maturation of 16S rRNA. It has affinity for free ribosomal 30S subunits but not for 70S ribosomes. The sequence is that of Ribosome maturation factor RimM from Rickettsia felis (strain ATCC VR-1525 / URRWXCal2) (Rickettsia azadi).